The primary structure comprises 202 residues: MSLVPMVVETTNRGERAYDIYSRLLKERVVFLVGQVEEHMANLVVAQLLFLESENPEKDIHLYINSPGGSVTAGMAIYDTMQFIRPSVSTLCIGQAASMGAVLLAAGEAGKRLVLPNARVMIHQPLGGFSGQASDFEIHAREILRIRENLNQVLSHHTGKPLEQVQLDTERDNFLSATEAVEYGLVDKVISHRELPEAEAES.

Ser98 (nucleophile) is an active-site residue. His123 is a catalytic residue.

Belongs to the peptidase S14 family. As to quaternary structure, fourteen ClpP subunits assemble into 2 heptameric rings which stack back to back to give a disk-like structure with a central cavity, resembling the structure of eukaryotic proteasomes.

The protein localises to the cytoplasm. It catalyses the reaction Hydrolysis of proteins to small peptides in the presence of ATP and magnesium. alpha-casein is the usual test substrate. In the absence of ATP, only oligopeptides shorter than five residues are hydrolyzed (such as succinyl-Leu-Tyr-|-NHMec, and Leu-Tyr-Leu-|-Tyr-Trp, in which cleavage of the -Tyr-|-Leu- and -Tyr-|-Trp bonds also occurs).. In terms of biological role, cleaves peptides in various proteins in a process that requires ATP hydrolysis. Has a chymotrypsin-like activity. Plays a major role in the degradation of misfolded proteins. The sequence is that of ATP-dependent Clp protease proteolytic subunit from Magnetococcus marinus (strain ATCC BAA-1437 / JCM 17883 / MC-1).